The following is a 389-amino-acid chain: D-alanyl-D-alanine carboxypeptidase DacF (389 aa).

An N-terminal signal peptide occupies residues methionine 1–alanine 23. Serine 64 serves as the catalytic Acyl-ester intermediate. Lysine 67 acts as the Proton acceptor in catalysis. Serine 124 is an active-site residue. Substrate is bound at residue lysine 230.

This sequence belongs to the peptidase S11 family.

Its subcellular location is the secreted. The enzyme catalyses Preferential cleavage: (Ac)2-L-Lys-D-Ala-|-D-Ala. Also transpeptidation of peptidyl-alanyl moieties that are N-acyl substituents of D-alanine.. It participates in cell wall biogenesis; peptidoglycan biosynthesis. Removes C-terminal D-alanyl residues from sugar-peptide cell wall precursors. The chain is D-alanyl-D-alanine carboxypeptidase DacF (dacF) from Bacillus subtilis (strain 168).